The sequence spans 190 residues: Potassium-transporting ATPase KdpC subunit (190 aa).

A helical transmembrane segment spans residues 13 to 33 (LLLILTLITGILYPIVTTGFA).

The protein belongs to the KdpC family. In terms of assembly, the system is composed of three essential subunits: KdpA, KdpB and KdpC.

It localises to the cell inner membrane. Its function is as follows. Part of the high-affinity ATP-driven potassium transport (or Kdp) system, which catalyzes the hydrolysis of ATP coupled with the electrogenic transport of potassium into the cytoplasm. This subunit acts as a catalytic chaperone that increases the ATP-binding affinity of the ATP-hydrolyzing subunit KdpB by the formation of a transient KdpB/KdpC/ATP ternary complex. This chain is Potassium-transporting ATPase KdpC subunit, found in Leptospira interrogans serogroup Icterohaemorrhagiae serovar copenhageni (strain Fiocruz L1-130).